The primary structure comprises 98 residues: Aspartyl/glutamyl-tRNA(Asn/Gln) amidotransferase subunit C (98 aa).

Belongs to the GatC family. As to quaternary structure, heterotrimer of A, B and C subunits.

The catalysed reaction is L-glutamyl-tRNA(Gln) + L-glutamine + ATP + H2O = L-glutaminyl-tRNA(Gln) + L-glutamate + ADP + phosphate + H(+). It catalyses the reaction L-aspartyl-tRNA(Asn) + L-glutamine + ATP + H2O = L-asparaginyl-tRNA(Asn) + L-glutamate + ADP + phosphate + 2 H(+). In terms of biological role, allows the formation of correctly charged Asn-tRNA(Asn) or Gln-tRNA(Gln) through the transamidation of misacylated Asp-tRNA(Asn) or Glu-tRNA(Gln) in organisms which lack either or both of asparaginyl-tRNA or glutaminyl-tRNA synthetases. The reaction takes place in the presence of glutamine and ATP through an activated phospho-Asp-tRNA(Asn) or phospho-Glu-tRNA(Gln). This is Aspartyl/glutamyl-tRNA(Asn/Gln) amidotransferase subunit C from Microcystis aeruginosa (strain NIES-843 / IAM M-2473).